A 633-amino-acid polypeptide reads, in one-letter code: Pesticidal crystal protein Cry2Ad (633 aa).

It belongs to the delta endotoxin family.

Functionally, promotes colloidosmotic lysis by binding to the midgut epithelial cells of insects. This is Pesticidal crystal protein Cry2Ad (cry2Ad) from Bacillus thuringiensis.